A 276-amino-acid polypeptide reads, in one-letter code: 4-deoxy-L-threo-5-hexosulose-uronate ketol-isomerase (276 aa).

Positions 194, 196, 201, and 243 each coordinate Zn(2+).

Belongs to the KduI family. Requires Zn(2+) as cofactor.

It carries out the reaction 5-dehydro-4-deoxy-D-glucuronate = 3-deoxy-D-glycero-2,5-hexodiulosonate. Its pathway is glycan metabolism; pectin degradation; 2-dehydro-3-deoxy-D-gluconate from pectin: step 4/5. Functionally, catalyzes the isomerization of 5-dehydro-4-deoxy-D-glucuronate to 3-deoxy-D-glycero-2,5-hexodiulosonate. This is 4-deoxy-L-threo-5-hexosulose-uronate ketol-isomerase from Lachnoclostridium phytofermentans (strain ATCC 700394 / DSM 18823 / ISDg) (Clostridium phytofermentans).